The chain runs to 335 residues: MPLSVFAEEFAEKSVKRYIGQGLWLPCNLSDYYYYQEFHDEGGYGSIHRVMDKATGNEVIMKHSYKLDFSPGILPEWWSKFGSLTDDLRERVVSNHQLRVSREAQILVQASTVLPEMKLHDYFDDGESFILIMDYGGRSLENIASSHKKKITNLVRYRAYKGNWFYKNWLKQVVDYMIKIYHKIKILYDIGIYHNDLKPENVLVDGDHITIIDFGVADFVPDENERKTWSCYDFRGTIDYIPPEVGTTGSFDPWHQTVWCFGVMLYFLSFMEYPFHIDNQFLEYALEGEKLDKLPEPFAQLIRECLSVDPDKRPLTSLLDRLTELHHHLQTIDVW.

Residues 33–329 enclose the Protein kinase domain; that stretch reads YYYQEFHDEG…DRLTELHHHL (297 aa). Residues 39–47 and Lys62 contribute to the ATP site; that span reads HDEGGYGSI. The active-site Proton acceptor is the Asp196.

It belongs to the protein kinase superfamily. Ser/Thr protein kinase family.

This Invertebrate iridescent virus 3 (IIV-3) protein is Putative serine/threonine-protein kinase 040L.